A 401-amino-acid chain; its full sequence is Rho-N domain-containing protein 1, chloroplastic (401 aa).

A chloroplast-targeting transit peptide spans 1–63; it reads MAMSGTFHLT…VPNRSSFVCR (63 aa). Disordered regions lie at residues 73-129 and 180-361; these read PDFS…PGPR and KHSG…EEAV. Composition is skewed to polar residues over residues 102–126, 210–223, and 240–265; these read DMLSSRNGPLFNLSSSPKFQATSSP, TGNLVTSGNKDNNA, and PRSQSPPAYSSEATFDQSSSYSVTWT. The span at 266–290 shows a compositional bias: basic and acidic residues; it reads QKKDTVELHDEPEHEPAYEHEHEPE. Over residues 339-358 the composition is skewed to acidic residues; the sequence is LSDDDESLDDADEDSDEAEE. Positions 339–371 form a coiled coil; it reads LSDDDESLDDADEDSDEAEEEAVKDLSELKLVE.

In terms of assembly, homodimer or homomultimer. Part of a chloroplastic degradosome-like complex. Interacts with RNE.

Its subcellular location is the plastid. It is found in the chloroplast. In terms of biological role, binds to and supports processing of specific plastid RNAs. Associates via its C-terminal Rho-N domain to single stranded regions of 16S and 23S rRNAs or to rbcL mRNAs. May be involved in targeting transcripts to RNases such as RNE or RNase J. The chain is Rho-N domain-containing protein 1, chloroplastic (RHON1) from Arabidopsis thaliana (Mouse-ear cress).